A 413-amino-acid chain; its full sequence is MGSIINIPGLPDGEFSNYEQVYLKMSRAFSHLQKEHWGIHCVCSVSRDSPNGSTFSETLRQAWMRLVVEYPGLSMVPVGLQKKYPRLDEKVVLLIQHWRVDALGTCMLLDRLFEILGQSTVPSTQPDQVQPNQPTPSFESAAGASKTEDADLQAYARDYIDSFHQRAVNADGLPYRGDATTPPSTTAHWDLDFSVDSTNAIKDACRHHKISVTAAIHTALARTVFSYLTETECQAGYTTVMAVNMRPYLPPPYNSKKHACQTFVASITPTVPYHSGFVESARSLTHEYRSWWSADFMRSLWWIYEYHLAKLSAPRPANAAPMKPPSGVTLSSLGVVDRNLRGGYGPNLRVDKFRFGVSMMTRQTILYAWTFKDRLTLSLNYNDAYYSDLMAREVMSRVASHLEKGLEVELNTV.

Residues 123-138 show a composition bias toward polar residues; the sequence is STQPDQVQPNQPTPSF. Residues 123 to 145 form a disordered region; that stretch reads STQPDQVQPNQPTPSFESAAGAS.

Its pathway is secondary metabolite biosynthesis. In terms of biological role, part of the gene cluster that mediates the biosynthesis of azaterrilone A and other azaphilones, a class of fungal metabolites characterized by a highly oxygenated pyrano-quinone bicyclic core and exhibiting a broad range of bioactivities. The first step of the pathway begins with the non-reducing polyketide synthase tazA that assembles one acetyl-CoA starter unit, five malonyl-CoA units, and catalyzes a series of Claisen condensations, methylation, PT-mediated cyclization, and finally releases the first hexaketide precursor through the R-domain. The tazA product then undergoes reduction on its terminal ketone and the following pyran-ring formation by yet undetermined enzyme(s). Dehydration and enoyl reduction, possibly involving the trans-enoyl reductase tazE leads to the next intermediate. TazD is predicted as an acetyltransferase and might catalyze the acetylation steps leading to the synthesis of azaterrilone A. Azaterrilone A is not the final product of the taz pathway and both the highly reducing polyketide synthase tazB and the dual enzyme tazHJ catalyze late steps of the pathway, leading to the production of the 2 final stereoisomers that contain additional polyketide modification whose structures have still to be determined. The polypeptide is Azaphilone biosynthesis cluster protein M (Aspergillus terreus (strain NIH 2624 / FGSC A1156)).